Reading from the N-terminus, the 345-residue chain is Leucine-rich repeat-containing protein 69 (345 aa).

10 LRR repeats span residues Lys-13–Leu-34, Ser-36–Cys-58, Arg-59–Leu-80, Cys-82–Gly-103, Asn-106–Leu-127, Ser-129–Gln-151, Asn-152–Leu-173, Asn-175–Leu-196, Lys-198–Val-219, and Pro-220–Gln-241.

Belongs to the LRRC69 family.

The protein is Leucine-rich repeat-containing protein 69 (lrrc69) of Xenopus laevis (African clawed frog).